The following is a 108-amino-acid chain: Pyrimidine/purine nucleoside phosphorylase (108 aa).

Belongs to the nucleoside phosphorylase PpnP family.

The catalysed reaction is a purine D-ribonucleoside + phosphate = a purine nucleobase + alpha-D-ribose 1-phosphate. It catalyses the reaction adenosine + phosphate = alpha-D-ribose 1-phosphate + adenine. It carries out the reaction cytidine + phosphate = cytosine + alpha-D-ribose 1-phosphate. The enzyme catalyses guanosine + phosphate = alpha-D-ribose 1-phosphate + guanine. The catalysed reaction is inosine + phosphate = alpha-D-ribose 1-phosphate + hypoxanthine. It catalyses the reaction thymidine + phosphate = 2-deoxy-alpha-D-ribose 1-phosphate + thymine. It carries out the reaction uridine + phosphate = alpha-D-ribose 1-phosphate + uracil. The enzyme catalyses xanthosine + phosphate = alpha-D-ribose 1-phosphate + xanthine. Catalyzes the phosphorolysis of diverse nucleosides, yielding D-ribose 1-phosphate and the respective free bases. Can use uridine, adenosine, guanosine, cytidine, thymidine, inosine and xanthosine as substrates. Also catalyzes the reverse reactions. The protein is Pyrimidine/purine nucleoside phosphorylase of Polaromonas naphthalenivorans (strain CJ2).